Reading from the N-terminus, the 200-residue chain is Probable GTP-binding protein EngB (200 aa).

In terms of domain architecture, EngB-type G spans 22 to 195; sequence GKDEIAFVGR…INNICSGINY (174 aa). GTP is bound by residues 30–37, 57–61, 75–78, 142–145, and 174–176; these read GRSNVGKS, GKTRL, DLPG, TKSD, and FSS. The Mg(2+) site is built by Ser-37 and Thr-59.

The protein belongs to the TRAFAC class TrmE-Era-EngA-EngB-Septin-like GTPase superfamily. EngB GTPase family. Mg(2+) serves as cofactor.

Its function is as follows. Necessary for normal cell division and for the maintenance of normal septation. This is Probable GTP-binding protein EngB from Clostridium acetobutylicum (strain ATCC 824 / DSM 792 / JCM 1419 / IAM 19013 / LMG 5710 / NBRC 13948 / NRRL B-527 / VKM B-1787 / 2291 / W).